The sequence spans 121 residues: Large ribosomal subunit protein bL19 (121 aa).

This sequence belongs to the bacterial ribosomal protein bL19 family.

Its function is as follows. This protein is located at the 30S-50S ribosomal subunit interface and may play a role in the structure and function of the aminoacyl-tRNA binding site. This Borrelia garinii subsp. bavariensis (strain ATCC BAA-2496 / DSM 23469 / PBi) (Borreliella bavariensis) protein is Large ribosomal subunit protein bL19.